A 400-amino-acid chain; its full sequence is Renin (400 aa).

Positions 1 to 17 (MPLWGLLLALWGCSTFS) are cleaved as a signal peptide. Positions 18–59 (LPADTAAFRRIFLKKMPSVRESLKERGVDMAQLGAEWSQLTK) are cleaved as a propeptide — activation peptide. Residue Asn65 is glycosylated (N-linked (GlcNAc...) asparagine). The Peptidase A1 domain maps to 80–397 (YYGEIGIGTP…DRRNNRIGFA (318 aa)). Asp98 is an active-site residue. Cys111 and Cys118 form a disulfide bridge. Asn135 carries N-linked (GlcNAc...) asparagine glycosylation. Cysteines 277 and 281 form a disulfide. Asp286 is a catalytic residue. Cys320 and Cys356 are disulfide-bonded. N-linked (GlcNAc...) asparagine glycosylation is present at Asn353.

This sequence belongs to the peptidase A1 family. As to quaternary structure, interacts with ATP6AP2. As to expression, kidney.

The protein localises to the secreted. It localises to the membrane. It catalyses the reaction Cleavage of Leu-|-Xaa bond in angiotensinogen to generate angiotensin I.. Interaction with ATP6AP2 results in a 5-fold increased efficiency in angiotensinogen processing. Renin is a highly specific endopeptidase, whose only known function is to generate angiotensin I from angiotensinogen in the plasma, initiating a cascade of reactions that produce an elevation of blood pressure and increased sodium retention by the kidney. This is Renin (REN) from Ovis aries (Sheep).